Reading from the N-terminus, the 371-residue chain is Peptide chain release factor 2 (371 aa).

At glutamine 252 the chain carries N5-methylglutamine.

This sequence belongs to the prokaryotic/mitochondrial release factor family. Post-translationally, methylated by PrmC. Methylation increases the termination efficiency of RF2.

Its subcellular location is the cytoplasm. Its function is as follows. Peptide chain release factor 2 directs the termination of translation in response to the peptide chain termination codons UGA and UAA. This chain is Peptide chain release factor 2, found in Staphylococcus epidermidis (strain ATCC 35984 / DSM 28319 / BCRC 17069 / CCUG 31568 / BM 3577 / RP62A).